A 340-amino-acid polypeptide reads, in one-letter code: UPF0324 membrane protein BC_5174 (340 aa).

A run of 10 helical transmembrane segments spans residues 13–35, 40–59, 99–118, 128–150, 157–179, 189–211, 218–240, 255–277, 279–301, and 316–338; these read FGFS…LAEL, IMGQ…AAIG, VLVI…YGLT, GILT…APQV, TAVG…TLLY, YGVF…APGG, AVIV…GLWF, LPIP…GIIP, VVAG…GLGL, and FVAG…YALG.

This sequence belongs to the UPF0324 family.

It localises to the cell membrane. In Bacillus cereus (strain ATCC 14579 / DSM 31 / CCUG 7414 / JCM 2152 / NBRC 15305 / NCIMB 9373 / NCTC 2599 / NRRL B-3711), this protein is UPF0324 membrane protein BC_5174.